Reading from the N-terminus, the 456-residue chain is Asparagine--tRNA ligase (456 aa).

Belongs to the class-II aminoacyl-tRNA synthetase family. In terms of assembly, homodimer.

It localises to the cytoplasm. It catalyses the reaction tRNA(Asn) + L-asparagine + ATP = L-asparaginyl-tRNA(Asn) + AMP + diphosphate + H(+). This is Asparagine--tRNA ligase from Mycoplasma genitalium (strain ATCC 33530 / DSM 19775 / NCTC 10195 / G37) (Mycoplasmoides genitalium).